The primary structure comprises 696 residues: DNA-directed RNA polymerase subunit beta' (696 aa).

Residues C76, C78, C94, and C97 each contribute to the Zn(2+) site. Mg(2+) contacts are provided by D496, D498, and D500.

This sequence belongs to the RNA polymerase beta' chain family. RpoC1 subfamily. In plastids the minimal PEP RNA polymerase catalytic core is composed of four subunits: alpha, beta, beta', and beta''. When a (nuclear-encoded) sigma factor is associated with the core the holoenzyme is formed, which can initiate transcription. The cofactor is Mg(2+). It depends on Zn(2+) as a cofactor.

It is found in the plastid. Its subcellular location is the chloroplast. The catalysed reaction is RNA(n) + a ribonucleoside 5'-triphosphate = RNA(n+1) + diphosphate. Functionally, DNA-dependent RNA polymerase catalyzes the transcription of DNA into RNA using the four ribonucleoside triphosphates as substrates. The protein is DNA-directed RNA polymerase subunit beta' of Guizotia abyssinica (Niger).